The chain runs to 362 residues: MDSPEVTFTLAYLVFAVCFVFTPNEFYSAGLTVQNLLSGWLGSEDAAFVPYHLRRTSATLLCHSLLPLGYYMGMCFAASEKQLYSPGQAPEAWQLFLLLAVTLPLLSCTLIYYWSWDRWTRHPLAQTLALYALPQSGWQAVASSINTEFRRIDKFATGAPGARVIVTDTWVMKVTTYRVHVAQQQDVHLTVTESRQHDLSPDSNLPVQLLTIRVASTSPGTQPFDIRLNSSEYGELCEKLHAPIRSAANVVIRQSLGDLFLETFASHVEVNPAYSVPSNQELEPCIGCMQTRASVKLVKTCQEPAVGECQQCYCRPMWCLTCMGKWFASRQDPQRPDTWLASRVPCPTCRARFCILDVCCVR.

The Lumenal portion of the chain corresponds to 1–6; sequence MDSPEV. The chain crosses the membrane as a helical span at residues 7-27; that stretch reads TFTLAYLVFAVCFVFTPNEFY. The Cytoplasmic segment spans residues 28 to 56; the sequence is SAGLTVQNLLSGWLGSEDAAFVPYHLRRT. The chain crosses the membrane as a helical span at residues 57 to 77; sequence SATLLCHSLLPLGYYMGMCFA. Topologically, residues 78–94 are lumenal; that stretch reads ASEKQLYSPGQAPEAWQ. Residues 95–115 traverse the membrane as a helical segment; sequence LFLLLAVTLPLLSCTLIYYWS. The Cytoplasmic segment spans residues 116-362; the sequence is WDRWTRHPLA…FCILDVCCVR (247 aa). The RING-type; degenerate zinc-finger motif lies at 285–350; the sequence is CIGCMQTRAS…ASRVPCPTCR (66 aa).

Belongs to the TMEM129 family. In terms of assembly, integral component of ER-resident dislocation complexes.

The protein resides in the endoplasmic reticulum membrane. It carries out the reaction S-ubiquitinyl-[E2 ubiquitin-conjugating enzyme]-L-cysteine + [acceptor protein]-L-lysine = [E2 ubiquitin-conjugating enzyme]-L-cysteine + N(6)-ubiquitinyl-[acceptor protein]-L-lysine.. Its pathway is protein modification; protein ubiquitination. Its function is as follows. E3 ubiquitin-protein ligase involved in ER-associated protein degradation, preferentially associates with the E2 enzyme UBE2J2. Exploited by viral US11 proteins to mediate HLA class I proteins degradation. In Mus musculus (Mouse), this protein is E3 ubiquitin-protein ligase TM129 (Tmem129).